A 291-amino-acid polypeptide reads, in one-letter code: Small ribosomal subunit protein uS2 (291 aa).

Positions 238 to 247 (DEESGDELDE) are enriched in acidic residues. Positions 238–291 (DEESGDELDESVSLHEEGREITDYENYTPPEEREYSVNDEGDVFDEDESLYEGR) are disordered. Basic and acidic residues predominate over residues 249 to 259 (VSLHEEGREIT). Acidic residues predominate over residues 274 to 291 (VNDEGDVFDEDESLYEGR).

The protein belongs to the universal ribosomal protein uS2 family.

The polypeptide is Small ribosomal subunit protein uS2 (rpsB) (Treponema pallidum (strain Nichols)).